The primary structure comprises 131 residues: Small ribosomal subunit protein uS8 (131 aa).

This sequence belongs to the universal ribosomal protein uS8 family. In terms of assembly, part of the 30S ribosomal subunit. Contacts proteins S5 and S12.

Functionally, one of the primary rRNA binding proteins, it binds directly to 16S rRNA central domain where it helps coordinate assembly of the platform of the 30S subunit. This chain is Small ribosomal subunit protein uS8, found in Campylobacter hominis (strain ATCC BAA-381 / DSM 21671 / CCUG 45161 / LMG 19568 / NCTC 13146 / CH001A).